The sequence spans 90 residues: Accessory gland-specific peptide 26Ab (90 aa).

A signal peptide spans 1–21; sequence MNYFAVLCIFSCICFWQFSDA.

Main cells of the accessory glands of males.

The protein localises to the secreted. The protein resides in the extracellular space. In terms of biological role, this protein is transferred from male to female during mating and may affect egglaying and behavior after mating. This Drosophila simulans (Fruit fly) protein is Accessory gland-specific peptide 26Ab (Acp26Ab).